A 320-amino-acid chain; its full sequence is Ferrochelatase (320 aa).

The Fe cation site is built by H194 and E275.

Belongs to the ferrochelatase family. As to quaternary structure, monomer.

It is found in the cytoplasm. It catalyses the reaction heme b + 2 H(+) = protoporphyrin IX + Fe(2+). Its pathway is porphyrin-containing compound metabolism; protoheme biosynthesis; protoheme from protoporphyrin-IX: step 1/1. Catalyzes the ferrous insertion into protoporphyrin IX. This Shigella dysenteriae serotype 1 (strain Sd197) protein is Ferrochelatase.